We begin with the raw amino-acid sequence, 130 residues long: 3-aminoacrylate deaminase RutC (130 aa).

It belongs to the RutC family.

The enzyme catalyses (Z)-3-aminoacrylate + H2O + H(+) = 3-oxopropanoate + NH4(+). In terms of biological role, involved in pyrimidine catabolism. Catalyzes the deamination of 3-aminoacrylate to malonic semialdehyde, a reaction that can also occur spontaneously. RutC may facilitate the reaction and modulate the metabolic fitness, rather than catalyzing essential functions. This is 3-aminoacrylate deaminase RutC from Variovorax paradoxus (strain S110).